Consider the following 443-residue polypeptide: Xaa-Pro dipeptidase (443 aa).

Mn(2+) contacts are provided by Asp246, Asp257, His339, Glu384, and Glu423.

It belongs to the peptidase M24B family. Bacterial-type prolidase subfamily. Mn(2+) is required as a cofactor.

The enzyme catalyses Xaa-L-Pro dipeptide + H2O = an L-alpha-amino acid + L-proline. In terms of biological role, splits dipeptides with a prolyl residue in the C-terminal position. In Escherichia coli O7:K1 (strain IAI39 / ExPEC), this protein is Xaa-Pro dipeptidase.